The sequence spans 426 residues: MIDVKLIRENIELVEENLRKRRSKVSLDKLKALEHERLDLLKEVEQDRAKKNESSKKIGEYMKAGNKEEAEKIKEEMKNFTESLNKKEEKLSQLEEAVNNEILYLPNMLSEDVPDGDDEKANKEIIRWGEPRKFDFEVKDHVDIAMGLDILDIERAVRMSRTRFSLMKGKGAALERALINFMLKKHTSEHGYTEYVPPILVNGRTMTGTGQLPKFEEDLFKTTDDPALYLIPTAEVPLTNIYREEIIPENMLPLYCTAYTPCFRSEAGSYGRDMRGLIRQHQFDKVELVKICAADKSKEEHEKMLKDAESILQALELPYRVVVLSSGDIGNAAYKTFDIEVWLPSQNMYREISSVSNCWDYQARRMQMRTRRNGKTELVHTLNGSGIAVGRTWIAILENYQQADGSVIIPDALRPFTGFDKIEKPN.

233 to 235 (TAE) lines the L-serine pocket. 264–266 (RSE) is a binding site for ATP. Residue E287 coordinates L-serine. 351–354 (EISS) contributes to the ATP binding site. S385 is a binding site for L-serine.

Belongs to the class-II aminoacyl-tRNA synthetase family. Type-1 seryl-tRNA synthetase subfamily. Homodimer. The tRNA molecule binds across the dimer.

It is found in the cytoplasm. The enzyme catalyses tRNA(Ser) + L-serine + ATP = L-seryl-tRNA(Ser) + AMP + diphosphate + H(+). It catalyses the reaction tRNA(Sec) + L-serine + ATP = L-seryl-tRNA(Sec) + AMP + diphosphate + H(+). It functions in the pathway aminoacyl-tRNA biosynthesis; selenocysteinyl-tRNA(Sec) biosynthesis; L-seryl-tRNA(Sec) from L-serine and tRNA(Sec): step 1/1. Functionally, catalyzes the attachment of serine to tRNA(Ser). Is also able to aminoacylate tRNA(Sec) with serine, to form the misacylated tRNA L-seryl-tRNA(Sec), which will be further converted into selenocysteinyl-tRNA(Sec). In Brachyspira hyodysenteriae (strain ATCC 49526 / WA1), this protein is Serine--tRNA ligase.